The primary structure comprises 485 residues: Inosine-5'-monophosphate dehydrogenase (485 aa).

2 CBS domains span residues 97–154 (IIRD…VSDV) and 155–211 (MVRD…PDAS). Residues D246 and 295–297 (GIG) contribute to the NAD(+) site. Residues G297 and G299 each contribute to the K(+) site. Residue S300 coordinates IMP. A K(+)-binding site is contributed by C302. C302 functions as the Thioimidate intermediate in the catalytic mechanism. IMP contacts are provided by residues 335–337 (DGG), 358–359 (GS), and 382–386 (YRGMG). R398 functions as the Proton acceptor in the catalytic mechanism. IMP is bound at residue E409. K(+) is bound by residues E463, S464, and H465.

This sequence belongs to the IMPDH/GMPR family. In terms of assembly, homotetramer. K(+) is required as a cofactor.

It carries out the reaction IMP + NAD(+) + H2O = XMP + NADH + H(+). It functions in the pathway purine metabolism; XMP biosynthesis via de novo pathway; XMP from IMP: step 1/1. Its activity is regulated as follows. Mycophenolic acid (MPA) is a non-competitive inhibitor that prevents formation of the closed enzyme conformation by binding to the same site as the amobile flap. In contrast, mizoribine monophosphate (MZP) is a competitive inhibitor that induces the closed conformation. MPA is a potent inhibitor of mammalian IMPDHs but a poor inhibitor of the bacterial enzymes. MZP is a more potent inhibitor of bacterial IMPDH. In terms of biological role, catalyzes the conversion of inosine 5'-phosphate (IMP) to xanthosine 5'-phosphate (XMP), the first committed and rate-limiting step in the de novo synthesis of guanine nucleotides, and therefore plays an important role in the regulation of cell growth. This is Inosine-5'-monophosphate dehydrogenase from Thermoplasma acidophilum (strain ATCC 25905 / DSM 1728 / JCM 9062 / NBRC 15155 / AMRC-C165).